Consider the following 146-residue polypeptide: UPF0178 protein BCG9842_B2187 (146 aa).

This sequence belongs to the UPF0178 family.

The chain is UPF0178 protein BCG9842_B2187 from Bacillus cereus (strain G9842).